The chain runs to 426 residues: MKAIGAPADLPVLMGDLAAQAREAARSLGLASTAQKNEALDAMARAIRSNAAAILQANAQDVADARAGGATAAFLDRLTLTQARVEAMADGVKVVREIDDPVGRVTERWQRPNGMTIERVRVPLGVVAVIFESRPNVCADAGVLCLKSGNAVILRGGSESFRSCRAIHACLVEGLREARLPEAAITLVPTRDRAAVGLLLSGMNGGIDVIVPRGGKSLVARVEAEARVPVFAHLEGVNHVYVDGAADLAMAKAVVLNSKMRRPGVCGAAETLLVDRSGVRDILKPLVEALIEAGCEVRGDSDVQGVDPRVRSAADSDWNTEYGDAIISARVVDGCGGAIDHIQRHGSRHTDAIVTEDPETAARFLNEVDSAIVLHNASTQFADGGEFGFGAEIGIATGKFHARGPVGAEQLTSFKYRVHGDGQVRP.

The protein belongs to the gamma-glutamyl phosphate reductase family.

It is found in the cytoplasm. The catalysed reaction is L-glutamate 5-semialdehyde + phosphate + NADP(+) = L-glutamyl 5-phosphate + NADPH + H(+). It participates in amino-acid biosynthesis; L-proline biosynthesis; L-glutamate 5-semialdehyde from L-glutamate: step 2/2. In terms of biological role, catalyzes the NADPH-dependent reduction of L-glutamate 5-phosphate into L-glutamate 5-semialdehyde and phosphate. The product spontaneously undergoes cyclization to form 1-pyrroline-5-carboxylate. The chain is Gamma-glutamyl phosphate reductase from Nitrobacter winogradskyi (strain ATCC 25391 / DSM 10237 / CIP 104748 / NCIMB 11846 / Nb-255).